The primary structure comprises 263 residues: Chromosomal replication initiator protein DnaA (263 aa).

A region of interest (domain I, interacts with DnaA modulators) is located at residue glutamate 1. A region of interest (domain II) is located at residue glutamate 1. Residues 1-179 form a domain III, AAA+ region region; it reads ESGMGKTHLL…GSVSRLNFWS (179 aa). Glycine 3, glycine 5, lysine 6, and threonine 7 together coordinate ATP. Residues 180–263 form a domain IV, binds dsDNA region; it reads QQNPEEKIIT…HTLAQIGEEF (84 aa).

The protein belongs to the DnaA family. In terms of assembly, oligomerizes as a right-handed, spiral filament on DNA at oriC.

The protein localises to the cytoplasm. In terms of biological role, plays an essential role in the initiation and regulation of chromosomal replication. ATP-DnaA binds to the origin of replication (oriC) to initiate formation of the DNA replication initiation complex once per cell cycle. Binds the DnaA box (a 9 base pair repeat at the origin) and separates the double-stranded (ds)DNA. Forms a right-handed helical filament on oriC DNA; dsDNA binds to the exterior of the filament while single-stranded (ss)DNA is stabiized in the filament's interior. The ATP-DnaA-oriC complex binds and stabilizes one strand of the AT-rich DNA unwinding element (DUE), permitting loading of DNA polymerase. After initiation quickly degrades to an ADP-DnaA complex that is not apt for DNA replication. Binds acidic phospholipids. The sequence is that of Chromosomal replication initiator protein DnaA from Mycoplasma mycoides.